The primary structure comprises 894 residues: LRR receptor-like serine/threonine-protein kinase IOS1 (894 aa).

A signal peptide spans 1-23 (MAFSSCFLLVLLQIFSALLLCLA). At 24–515 (QDQSGFISLD…KKKKNTVIAP (492 aa)) the chain is on the extracellular side. N-linked (GlcNAc...) asparagine glycosylation is found at Asn48, Asn95, Asn137, Asn179, Asn223, Asn230, Asn260, Asn287, Asn309, Asn338, Asn399, Asn441, Asn462, and Asn469. LRR repeat units follow at residues 431 to 457 (LTSL…NMET) and 459 to 479 (KLIN…LLDK). A helical membrane pass occupies residues 516-536 (VAASLVSVFLIGAGIVTFLIL). The Cytoplasmic segment spans residues 537–894 (KRKKRTKLGL…FTTELNPGAR (358 aa)). Thr577 carries the post-translational modification Phosphothreonine. Residues 586–858 (NNFERVLGRG…QVVMDLKECL (273 aa)) enclose the Protein kinase domain. Residues 592-600 (LGRGGFGVV) and Lys613 each bind ATP. The residue at position 658 (Tyr658) is a Phosphotyrosine. The active-site Proton acceptor is Asp710. Phosphoserine is present on Ser744. Phosphothreonine is present on residues Thr745 and Thr750. Tyr758 is subject to Phosphotyrosine.

This sequence belongs to the protein kinase superfamily. Ser/Thr protein kinase family. Homodimerization. Interacts with BAK1 and FLS2; triggers FLS2-BAK1 complex formation upon microbe-associated molecular patterns (MAMPs) treatment. Also binds to CERK1 and EFR. As to expression, expressed in roots, cotyledons, leaves, flowers and siliques.

It is found in the cell membrane. In terms of biological role, negatively regulates the abscisic acid (ABA) signaling pathway. Required for full susceptibility to filamentous (hemi)biotrophic oomycetes (e.g. H.arabidopsidis and P.parasitica) and fungal (e.g. E.cruciferarum) pathogens, probably by triggering the repression of ABA-sensitive COLD REGULATED and RESISTANCE TO DESICCATION genes during infection, but independently of immune responses. Involved in BAK1-dependent and BAK1-independent microbe-associated molecular patterns (MAMPs)-triggered immunity (PTI) leading to defense responses, including callose deposition and MAPK cascade activation, toward pathogenic bacteria (e.g. P.syringae). Required for chitin-mediated PTI. The protein is LRR receptor-like serine/threonine-protein kinase IOS1 of Arabidopsis thaliana (Mouse-ear cress).